We begin with the raw amino-acid sequence, 319 residues long: Probable casein kinase II subunit alpha homolog (319 aa).

The 280-residue stretch at 37-316 (YQIYQRMGRG…ADECLRHPLF (280 aa)) folds into the Protein kinase domain. ATP-binding positions include 43 to 51 (MGRGKYSEV) and Lys-64. Asp-151 acts as the Proton acceptor in catalysis.

Belongs to the protein kinase superfamily. Ser/Thr protein kinase family. CK2 subfamily. As to quaternary structure, tetramer composed of two alpha chains, one beta chain and one beta' chain.

It carries out the reaction L-seryl-[protein] + ATP = O-phospho-L-seryl-[protein] + ADP + H(+). It catalyses the reaction L-threonyl-[protein] + ATP = O-phospho-L-threonyl-[protein] + ADP + H(+). In terms of biological role, catalytic subunit of a constitutively active serine/threonine-protein kinase complex that phosphorylates a large number of substrates containing acidic residues C-terminal to the phosphorylated serine or threonine. This Encephalitozoon cuniculi (strain GB-M1) (Microsporidian parasite) protein is Probable casein kinase II subunit alpha homolog (CKA1).